The following is a 530-amino-acid chain: G2/mitotic-specific cyclin-B (530 aa).

The interval 76–152 (ARVDSHWKKQ…EPTLKREDSN (77 aa)) is disordered. Positions 121 to 144 (PTKTTVEPTKVTVKSSSSENVNEP) are enriched in low complexity. Phosphoserine is present on serine 137.

This sequence belongs to the cyclin family. Cyclin AB subfamily. As to quaternary structure, interacts with the protein kinase Cdk1 to form a serine/threonine kinase holoenzyme complex also known as maturation promoting factor (MPF). The cyclin subunit imparts substrate specificity to the complex.

In terms of biological role, essential for the control of the cell cycle at the G2/M (mitosis) transition. The chain is G2/mitotic-specific cyclin-B (CycB) from Drosophila melanogaster (Fruit fly).